We begin with the raw amino-acid sequence, 241 residues long: Putative lipoprotein YvcA (241 aa).

The N-terminal stretch at 1 to 18 (MKKIIFICFSLLLALTGG) is a signal peptide. Residue cysteine 19 is the site of N-palmitoyl cysteine attachment. Residue cysteine 19 is the site of S-diacylglycerol cysteine attachment. The interval 22–48 (NDNDKNSTNDNKTEAVKPKDMDPKDLP) is disordered. Residues 23-46 (DNDKNSTNDNKTEAVKPKDMDPKD) show a composition bias toward basic and acidic residues.

Its subcellular location is the cell membrane. Required for complex colony architecture. This is Putative lipoprotein YvcA (yvcA) from Bacillus subtilis (strain 168).